A 93-amino-acid polypeptide reads, in one-letter code: Red pigment-concentrating hormone (93 aa).

Residues 1–21 (MVRAVVATLLVVLVVASCVSA) form the signal peptide. Position 22 is a pyrrolidone carboxylic acid (glutamine 22). Tryptophan amide is present on tryptophan 29. Residues 33–93 (AAAGGEGTGM…VQCQDEEYLG (61 aa)) constitute a propeptide that is removed on maturation. The disordered stretch occupies residues 34-56 (AAGGEGTGMHPPAGAVVPPPSSL).

It belongs to the AKH/HRTH/RPCH family. Strongly expressed in the eyestalk and weakly in brain. Not expressed in other tissues tested.

Its subcellular location is the secreted. Functionally, this hormone adapts the animal to light backgrounds by stimulating concentration of the pigment of its red body-chromatophores. This chain is Red pigment-concentrating hormone, found in Penaeus monodon (Giant tiger prawn).